The primary structure comprises 519 residues: Circadian clock oscillator protein KaiC (519 aa).

KaiC domains follow at residues 1-246 (MSEK…VNIF) and 260-519 (VRVS…GSDS). ATP is bound by residues Gly48, Thr49, Gly50, Lys51, Thr52, Leu53, Lys223, Leu224, Arg225, Thr227, His229, Thr239, Thr289, Gly290, Thr291, Gly292, Lys293, Thr294, and Leu295. Thr52 is a binding site for Mg(2+). Thr294 contacts Mg(2+). Glu317 lines the Mg(2+) pocket. Trp330 serves as a coordination point for ATP. At Ser430 the chain carries Phosphoserine; by autocatalysis. Thr431 carries the post-translational modification Phosphothreonine; by autocatalysis. Residues Arg450, Lys456, Met457, Arg458, Ser460, His462, and Lys464 each contribute to the ATP site.

This sequence belongs to the KaiC family. Homohexamer; hexamerization is dependent on ATP-binding. The KaiABC complex composition changes during the circadian cycle to control KaiC phosphorylation. Complexes KaiC(6), KaiA(2-4):KaiC(6), KaiB(6):KaiC(6) and KaiC(6):KaiB(6):KaiA(12) are among the most important forms, many form cooperatively. KaiC interacts with SasA, activating its autokinase function and leading to RpaA activation. Mg(2+) serves as cofactor. Post-translationally, phosphorylated on serine and threonine residues by autocatalysis. Has a 4 step phosphorylation cycle; the autokinase acts first on Thr-431, then Ser-430. When Ser-430 is modified KaiC switches to an autophosphatase mode, acting first on phospho-Thr-431 then phospho-Ser-430.

The catalysed reaction is L-seryl-[protein] + ATP = O-phospho-L-seryl-[protein] + ADP + H(+). It catalyses the reaction L-threonyl-[protein] + ATP = O-phospho-L-threonyl-[protein] + ADP + H(+). The enzyme catalyses ATP + H2O = ADP + phosphate + H(+). The interaction with KaiA enhances its phosphorylation status, while the interaction with KaiB decreases it. In terms of biological role, central component of the KaiABC oscillator complex, which constitutes the main circadian regulator in cyanobacteria. Complex composition changes during the circadian cycle to control KaiC phosphorylation. KaiA stimulates KaiC autophosphorylation, while KaiB sequesters KaiA, leading to KaiC autodephosphorylation. Clock output pathways impact the RpaA transcriptional regulator. KaiC enhances the autophosphorylation activity of SasA, which then transfers its phosphate group to RpaA to activate it. KaiB and KaiC together enhance the phospho-RpaA dephosphatase activity of CikA. Its function is as follows. Has a weak, temperature-independent ATPase activity; ATPase activity defines the circadian period. The phosphorylation state of KaiC modulates its ATPase activity and effects KaiB binding. This is Circadian clock oscillator protein KaiC from Nostoc sp. (strain PCC 7120 / SAG 25.82 / UTEX 2576).